The following is a 145-amino-acid chain: D-aminoacyl-tRNA deacylase (145 aa).

The Gly-cisPro motif, important for rejection of L-amino acids motif lies at 137 to 138; the sequence is GP.

The protein belongs to the DTD family. Homodimer.

The protein localises to the cytoplasm. The catalysed reaction is glycyl-tRNA(Ala) + H2O = tRNA(Ala) + glycine + H(+). The enzyme catalyses a D-aminoacyl-tRNA + H2O = a tRNA + a D-alpha-amino acid + H(+). Functionally, an aminoacyl-tRNA editing enzyme that deacylates mischarged D-aminoacyl-tRNAs. Also deacylates mischarged glycyl-tRNA(Ala), protecting cells against glycine mischarging by AlaRS. Acts via tRNA-based rather than protein-based catalysis; rejects L-amino acids rather than detecting D-amino acids in the active site. By recycling D-aminoacyl-tRNA to D-amino acids and free tRNA molecules, this enzyme counteracts the toxicity associated with the formation of D-aminoacyl-tRNA entities in vivo and helps enforce protein L-homochirality. The sequence is that of D-aminoacyl-tRNA deacylase from Shewanella frigidimarina (strain NCIMB 400).